A 158-amino-acid polypeptide reads, in one-letter code: Small ribosomal subunit protein uS15 (158 aa).

Over residues 1-18 the composition is skewed to basic residues; sequence MARMHARKRGKSGSKRPP. Residues 1 to 21 are disordered; the sequence is MARMHARKRGKSGSKRPPRTA.

The protein belongs to the universal ribosomal protein uS15 family. In terms of assembly, part of the 30S ribosomal subunit.

In Pyrococcus abyssi (strain GE5 / Orsay), this protein is Small ribosomal subunit protein uS15.